Reading from the N-terminus, the 466-residue chain is MAKNRRDRGTDLPGDGDQKISTGPEIVSVTVHPSPNLAAAAKPVQGDIWASLLESSPWSANQGGLVETAQPPSAPIRSQDPVPVADLVNRWSQPIWRTAPLAGNAESSEEGVVAPSLTQSDSVLAVSDLVIDVQPETDAEVEVSIEPEPALVEPVIEIEAEAAEVEPEPAPVADLVNRWAQPIWRTAPLAGNAESSEEGVVAPSLTQSDSVLAVSDLVIDVQPEANAEVEVSIEPEPALVEPVIEIEAEAAEVEPEPAPVEPVIEIEAEAAEVEPEPAPVEPVIEIEAEAAEVEPEPAPVEPAIEIEAIRVELEPVLIDEVVELVTEFEYSQAESVASADLIANPAPAESSRLAELLDEAAAIAAPAVAVAVEATRQPNKITASVKKRAPVQEVPVEDLLGGIFGVAGSAVRGVFTIGGGFVDGVVKGGRLVGSNVVAGTRRLAQTIEVSCGSCSSPKCDAEDKNK.

2 disordered regions span residues 1 to 23 (MAKN…ISTG) and 60 to 80 (ANQG…RSQD). Residues 1-24 (MAKNRRDRGTDLPGDGDQKISTGP) are not required to restore magnetic response to deletion mutant. The required to restore magnetic response to deletion mutant stretch occupies residues 25–80 (EIVSVTVHPSPNLAAAAKPVQGDIWASLLESSPWSANQGGLVETAQPPSAPIRSQD). 2 Tandem repeat unit repeats span residues 81–168 (PVPV…VEPE) and 169–256 (PAPV…VEPE). Not required to restore magnetic response to deletion mutant stretches follow at residues 81-256 (PVPV…VEPE), 136-334 (ETDA…SQAE), 333-374 (AESV…AVEA), and 432-466 (VGSN…DKNK). Glu-Pro-rich motif repeat units follow at residues 145-164 (IEPE…EAAE), 233-252 (IEPE…EAAE), and 253-272 (VEPE…EAAE). 2 required to restore magnetic response to deletion mutant regions span residues 375 to 432 (TRQP…GRLV) and 426 to 466 (VKGG…DKNK).

Belongs to the magnetosome MamJ protein family. As to quaternary structure, forms homooligomers. Interacts with MamK. In terms of processing, identified by N-terminal sequencing of a protein that is about 96 kDa in size. The protein runs anomalously on protein gels.

The protein localises to the magnetosome. In terms of biological role, required for assembly of magnetosome chains. Regulates the dynamic behavior of MamK filaments. May connect magnetosomes to MamK filaments. Moves from the cell poles towards midcell; movement does not depend on the treadmilling ability of MamK, suggesting MamJ associates and disassociates continuously from the MamK filament. This Magnetospirillum gryphiswaldense (strain DSM 6361 / JCM 21280 / NBRC 15271 / MSR-1) protein is Magnetosome-associated protein MamJ.